The primary structure comprises 724 residues: 1,4-alpha-glucan branching enzyme GlgB 1 (724 aa).

Catalysis depends on Asp403, which acts as the Nucleophile. Glu456 acts as the Proton donor in catalysis.

The protein belongs to the glycosyl hydrolase 13 family. GlgB subfamily. Monomer.

The catalysed reaction is Transfers a segment of a (1-&gt;4)-alpha-D-glucan chain to a primary hydroxy group in a similar glucan chain.. Its pathway is glycan biosynthesis; glycogen biosynthesis. Its function is as follows. Catalyzes the formation of the alpha-1,6-glucosidic linkages in glycogen by scission of a 1,4-alpha-linked oligosaccharide from growing alpha-1,4-glucan chains and the subsequent attachment of the oligosaccharide to the alpha-1,6 position. The sequence is that of 1,4-alpha-glucan branching enzyme GlgB 1 from Xanthomonas campestris pv. campestris (strain 8004).